Here is a 127-residue protein sequence, read N- to C-terminus: Fluoride-specific ion channel FluC (127 aa).

The next 4 membrane-spanning stretches (helical) occupy residues 1–21 (MPQG…GACL), 39–59 (FGTL…YGVI), 72–92 (LIGV…VETL), and 105–125 (ANVF…IELM). Positions 79 and 82 each coordinate Na(+).

The protein belongs to the fluoride channel Fluc/FEX (TC 1.A.43) family.

The protein localises to the cell inner membrane. It carries out the reaction fluoride(in) = fluoride(out). With respect to regulation, na(+) is not transported, but it plays an essential structural role and its presence is essential for fluoride channel function. Functionally, fluoride-specific ion channel. Important for reducing fluoride concentration in the cell, thus reducing its toxicity. This Alteromonas mediterranea (strain DSM 17117 / CIP 110805 / LMG 28347 / Deep ecotype) protein is Fluoride-specific ion channel FluC.